The chain runs to 132 residues: Small ribosomal subunit protein uS19 (132 aa).

It belongs to the universal ribosomal protein uS19 family.

Functionally, protein S19 forms a complex with S13 that binds strongly to the 16S ribosomal RNA. This Korarchaeum cryptofilum (strain OPF8) protein is Small ribosomal subunit protein uS19.